A 116-amino-acid chain; its full sequence is Iron-sulfur cluster insertion protein ErpA (116 aa).

Residues Cys-44, Cys-108, and Cys-110 each contribute to the iron-sulfur cluster site.

It belongs to the HesB/IscA family. As to quaternary structure, homodimer. Iron-sulfur cluster is required as a cofactor.

Functionally, required for insertion of 4Fe-4S clusters for at least IspG. The chain is Iron-sulfur cluster insertion protein ErpA from Pseudomonas fluorescens (strain ATCC BAA-477 / NRRL B-23932 / Pf-5).